We begin with the raw amino-acid sequence, 408 residues long: Zinc finger protein 764 (408 aa).

The region spanning 26-97 (VSFADVAVYF…AAQDPEVAKC (72 aa)) is the KRAB domain. The segment at 91-167 (DPEVAKCQTQ…GRPSLCAHPP (77 aa)) is disordered. 7 consecutive C2H2-type zinc fingers follow at residues 175–197 (HGCYVCGKSFAWRSTLVEHVYSH), 203–225 (FHCTDCGKGFGHASSLSKHRAIH), 231–253 (HRCLECGRAFTQRSALTSHLRVH), 259–281 (YGCADCGRRFSQSSALYQHRRVH), 287–309 (FPCPDCGRAFAYPSDLRRHVRTH), 315–337 (YPCPDCGRCFRQSSEMAAHRRTH), and 343–365 (YPCPQCGRRFGQKSAVAKHQWVH).

It belongs to the krueppel C2H2-type zinc-finger protein family. Interacts (via KRAB domain) with NR3C1/GR (via NR LBD domain); the interaction regulates transcription factor activity of NR3C1 by directing its actions toward certain biologic pathways.

The protein resides in the nucleus. Its function is as follows. Zinc finger protein that functions as a cofactor for steroid hormone receptors, such as NR3C1/GR. Directs NR3C1/GR transcriptional activity toward specific biologic pathways by changing NR3C1/GR binding and transcriptional activity on the glucocorticoid-responsive genes. In Homo sapiens (Human), this protein is Zinc finger protein 764.